Reading from the N-terminus, the 331-residue chain is D-alanine--D-alanine ligase (331 aa).

Residues 116-316 (KRQWQTHGLP…YEDFVLQLAA (201 aa)) form the ATP-grasp domain. Residue 142–197 (ADRLGLPLIVKPAREGSSIGLTKVTSVAELPAAYEKAARLDRDVMAEQFIEGDELT) coordinates ATP. Positions 269, 283, and 285 each coordinate Mg(2+).

This sequence belongs to the D-alanine--D-alanine ligase family. Requires Mg(2+) as cofactor. Mn(2+) is required as a cofactor.

Its subcellular location is the cytoplasm. It catalyses the reaction 2 D-alanine + ATP = D-alanyl-D-alanine + ADP + phosphate + H(+). The protein operates within cell wall biogenesis; peptidoglycan biosynthesis. In terms of biological role, cell wall formation. This is D-alanine--D-alanine ligase from Ralstonia pickettii (strain 12J).